The sequence spans 349 residues: sn-glycerol-3-phosphate import ATP-binding protein UgpC (349 aa).

The ABC transporter domain maps to Ile4 to Ile235. Gly37 to Ser44 contributes to the ATP binding site.

This sequence belongs to the ABC transporter superfamily. sn-glycerol-3-phosphate importer (TC 3.A.1.1.3) family. In terms of assembly, the complex is composed of two ATP-binding proteins (UgpC), two transmembrane proteins (UgpA and UgpE) and a solute-binding protein (UgpB).

The protein resides in the cell inner membrane. The enzyme catalyses sn-glycerol 3-phosphate(out) + ATP + H2O = sn-glycerol 3-phosphate(in) + ADP + phosphate + H(+). In terms of biological role, part of the ABC transporter complex UgpBAEC involved in sn-glycerol-3-phosphate (G3P) import. Responsible for energy coupling to the transport system. The protein is sn-glycerol-3-phosphate import ATP-binding protein UgpC of Rhizobium meliloti (strain 1021) (Ensifer meliloti).